The sequence spans 188 residues: Molybdopterin synthase catalytic subunit (188 aa).

Residues M1 to P14 are compositionally biased toward low complexity. Residues M1 to T23 are disordered. Residues H134–R135, K150, and K157–E159 contribute to the substrate site.

Belongs to the MoaE family. MOCS2B subfamily. As to quaternary structure, heterotetramer; composed of 2 small (MOCS2A) and 2 large (MOCS2B) subunits.

The protein localises to the cytoplasm. It carries out the reaction 2 [molybdopterin-synthase sulfur-carrier protein]-C-terminal-Gly-aminoethanethioate + cyclic pyranopterin phosphate + H2O = molybdopterin + 2 [molybdopterin-synthase sulfur-carrier protein]-C-terminal Gly-Gly + 2 H(+). It functions in the pathway cofactor biosynthesis; molybdopterin biosynthesis. In terms of biological role, catalytic subunit of the molybdopterin synthase complex, a complex that catalyzes the conversion of precursor Z into molybdopterin. Acts by mediating the incorporation of 2 sulfur atoms from thiocarboxylated MOCS2A into precursor Z to generate a dithiolene group. The polypeptide is Molybdopterin synthase catalytic subunit (Aspergillus fumigatus (strain ATCC MYA-4609 / CBS 101355 / FGSC A1100 / Af293) (Neosartorya fumigata)).